Here is a 155-residue protein sequence, read N- to C-terminus: MPGQTQKTPAFTTDQFLDLINRLFGLDLAIVSERNIPLIINRLDDINLKLLLAKMMVNGMDEFIPFRHSPEGIRSINVEQIPPASGDPVDTPDYRLSIEYKNGEQDNFICTYDETKWKCTARDVDEITSIIGKRSQANSKNDSNSKDDLPNPFSV.

The interval 135–155 is disordered; sequence SQANSKNDSNSKDDLPNPFSV.

This is an uncharacterized protein from Acidianus convivator (ATV).